A 205-amino-acid polypeptide reads, in one-letter code: Probable thymidylate kinase (205 aa).

Position 10–17 (Gly-10–Ser-17) interacts with ATP.

It belongs to the thymidylate kinase family.

It catalyses the reaction dTMP + ATP = dTDP + ADP. The sequence is that of Probable thymidylate kinase from Methanosarcina barkeri (strain Fusaro / DSM 804).